Here is a 252-residue protein sequence, read N- to C-terminus: Pantothenate synthetase (252 aa).

29-36 (MGNLHAGH) contacts ATP. Catalysis depends on His-36, which acts as the Proton donor. Gln-60 provides a ligand contact to (R)-pantoate. Gln-60 lines the beta-alanine pocket. 146 to 149 (GEKD) contacts ATP. Gln-152 is a (R)-pantoate binding site. Residues Val-175 and 183–186 (CSSR) each bind ATP.

This sequence belongs to the pantothenate synthetase family. In terms of assembly, homodimer.

The protein resides in the cytoplasm. It carries out the reaction (R)-pantoate + beta-alanine + ATP = (R)-pantothenate + AMP + diphosphate + H(+). Its pathway is cofactor biosynthesis; (R)-pantothenate biosynthesis; (R)-pantothenate from (R)-pantoate and beta-alanine: step 1/1. Its function is as follows. Catalyzes the condensation of pantoate with beta-alanine in an ATP-dependent reaction via a pantoyl-adenylate intermediate. This is Pantothenate synthetase from Legionella pneumophila (strain Lens).